The chain runs to 318 residues: Ferrochelatase (318 aa).

2 residues coordinate Fe cation: H194 and E275.

This sequence belongs to the ferrochelatase family.

The protein localises to the cytoplasm. It carries out the reaction heme b + 2 H(+) = protoporphyrin IX + Fe(2+). It participates in porphyrin-containing compound metabolism; protoheme biosynthesis; protoheme from protoporphyrin-IX: step 1/1. Its function is as follows. Catalyzes the ferrous insertion into protoporphyrin IX. In Xanthomonas axonopodis pv. citri (strain 306), this protein is Ferrochelatase.